Reading from the N-terminus, the 262-residue chain is Small ribosomal subunit protein eS4C (262 aa).

The 64-residue stretch at 42–105 folds into the S4 RNA-binding domain; the sequence is LPLIVFLRNR…GEHFRLVYDI (64 aa). Threonine 194 carries the post-translational modification Phosphothreonine.

This sequence belongs to the eukaryotic ribosomal protein eS4 family. Component of the small ribosomal subunit (SSU). Mature yeast ribosomes consist of a small (40S) and a large (60S) subunit. The 40S small subunit contains 1 molecule of ribosomal RNA (18S rRNA) and at least 33 different proteins. The large 60S subunit contains 3 rRNA molecules (25S, 5.8S and 5S rRNA) and at least 46 different proteins.

The protein localises to the cytoplasm. Functionally, component of the ribosome, a large ribonucleoprotein complex responsible for the synthesis of proteins in the cell. The small ribosomal subunit (SSU) binds messenger RNAs (mRNAs) and translates the encoded message by selecting cognate aminoacyl-transfer RNA (tRNA) molecules. The large subunit (LSU) contains the ribosomal catalytic site termed the peptidyl transferase center (PTC), which catalyzes the formation of peptide bonds, thereby polymerizing the amino acids delivered by tRNAs into a polypeptide chain. The nascent polypeptides leave the ribosome through a tunnel in the LSU and interact with protein factors that function in enzymatic processing, targeting, and the membrane insertion of nascent chains at the exit of the ribosomal tunnel. This Schizosaccharomyces pombe (strain 972 / ATCC 24843) (Fission yeast) protein is Small ribosomal subunit protein eS4C (rps403).